Consider the following 647-residue polypeptide: Exoribonuclease 2 (647 aa).

Residues 192-520 form the RNB domain; that stretch reads REDLTALSFV…NHRLLKAIIS (329 aa). The region spanning 565-647 is the S1 motif domain; the sequence is ESTFNAEIID…ETRNIVARPI (83 aa).

The protein belongs to the RNR ribonuclease family. RNase II subfamily.

It is found in the cytoplasm. It carries out the reaction Exonucleolytic cleavage in the 3'- to 5'-direction to yield nucleoside 5'-phosphates.. In terms of biological role, involved in mRNA degradation. Hydrolyzes single-stranded polyribonucleotides processively in the 3' to 5' direction. This Proteus mirabilis (strain HI4320) protein is Exoribonuclease 2.